Reading from the N-terminus, the 125-residue chain is Large ribosomal subunit protein bL12 (125 aa).

Belongs to the bacterial ribosomal protein bL12 family. As to quaternary structure, homodimer. Part of the ribosomal stalk of the 50S ribosomal subunit. Forms a multimeric L10(L12)X complex, where L10 forms an elongated spine to which 2 to 4 L12 dimers bind in a sequential fashion. Binds GTP-bound translation factors.

Functionally, forms part of the ribosomal stalk which helps the ribosome interact with GTP-bound translation factors. Is thus essential for accurate translation. The sequence is that of Large ribosomal subunit protein bL12 from Rickettsia conorii (strain ATCC VR-613 / Malish 7).